We begin with the raw amino-acid sequence, 245 residues long: 1-(5-phosphoribosyl)-5-[(5-phosphoribosylamino)methylideneamino] imidazole-4-carboxamide isomerase (245 aa).

The active-site Proton acceptor is aspartate 8. The active-site Proton donor is aspartate 130.

This sequence belongs to the HisA/HisF family.

It localises to the cytoplasm. It carries out the reaction 1-(5-phospho-beta-D-ribosyl)-5-[(5-phospho-beta-D-ribosylamino)methylideneamino]imidazole-4-carboxamide = 5-[(5-phospho-1-deoxy-D-ribulos-1-ylimino)methylamino]-1-(5-phospho-beta-D-ribosyl)imidazole-4-carboxamide. Its pathway is amino-acid biosynthesis; L-histidine biosynthesis; L-histidine from 5-phospho-alpha-D-ribose 1-diphosphate: step 4/9. The polypeptide is 1-(5-phosphoribosyl)-5-[(5-phosphoribosylamino)methylideneamino] imidazole-4-carboxamide isomerase (Ectopseudomonas mendocina (strain ymp) (Pseudomonas mendocina)).